A 558-amino-acid polypeptide reads, in one-letter code: CTP synthase (558 aa).

The interval 1 to 266 is amidoligase domain; the sequence is MSAKYIFVTG…DRLVMKYLRL (266 aa). CTP is bound at residue serine 14. Serine 14 serves as a coordination point for UTP. ATP contacts are provided by residues 15 to 20 and aspartate 72; that span reads SLGKGL. Mg(2+) is bound by residues aspartate 72 and glutamate 140. CTP-binding positions include 147–149, 187–192, and lysine 223; these read DIE and KTKPTQ. UTP is bound by residues 187 to 192 and lysine 223; that span reads KTKPTQ. Residue 239–241 coordinates ATP; the sequence is KDV. A Glutamine amidotransferase type-1 domain is found at 291–537; that stretch reads IIGIIGKYVE…IGASYEHRMK (247 aa). Residue glycine 355 coordinates L-glutamine. Cysteine 382 functions as the Nucleophile; for glutamine hydrolysis in the catalytic mechanism. L-glutamine is bound by residues 383-386, glutamate 406, and arginine 463; that span reads LGMQ. Residues histidine 510 and glutamate 512 contribute to the active site. Positions 539–558 are disordered; it reads THTKEREEESVFLRPERVGK. A compositionally biased stretch (basic and acidic residues) spans 542–558; sequence KEREEESVFLRPERVGK.

Belongs to the CTP synthase family. As to quaternary structure, homotetramer.

The enzyme catalyses UTP + L-glutamine + ATP + H2O = CTP + L-glutamate + ADP + phosphate + 2 H(+). It catalyses the reaction L-glutamine + H2O = L-glutamate + NH4(+). It carries out the reaction UTP + NH4(+) + ATP = CTP + ADP + phosphate + 2 H(+). Its pathway is pyrimidine metabolism; CTP biosynthesis via de novo pathway; CTP from UDP: step 2/2. Allosterically activated by GTP, when glutamine is the substrate; GTP has no effect on the reaction when ammonia is the substrate. The allosteric effector GTP functions by stabilizing the protein conformation that binds the tetrahedral intermediate(s) formed during glutamine hydrolysis. Inhibited by the product CTP, via allosteric rather than competitive inhibition. Catalyzes the ATP-dependent amination of UTP to CTP with either L-glutamine or ammonia as the source of nitrogen. Regulates intracellular CTP levels through interactions with the four ribonucleotide triphosphates. The sequence is that of CTP synthase from Koribacter versatilis (strain Ellin345).